The chain runs to 181 residues: Large ribosomal subunit protein uL5 (181 aa).

This sequence belongs to the universal ribosomal protein uL5 family. In terms of assembly, part of the 50S ribosomal subunit; part of the 5S rRNA/L5/L18/L25 subcomplex. Contacts the 5S rRNA and the P site tRNA. Forms a bridge to the 30S subunit in the 70S ribosome.

Functionally, this is one of the proteins that bind and probably mediate the attachment of the 5S RNA into the large ribosomal subunit, where it forms part of the central protuberance. In the 70S ribosome it contacts protein S13 of the 30S subunit (bridge B1b), connecting the 2 subunits; this bridge is implicated in subunit movement. Contacts the P site tRNA; the 5S rRNA and some of its associated proteins might help stabilize positioning of ribosome-bound tRNAs. The chain is Large ribosomal subunit protein uL5 from Helicobacter pylori (strain HPAG1).